Reading from the N-terminus, the 144-residue chain is Maximins 1/H1 (144 aa).

A signal peptide spans 1–18 (MNFKYIVAVSFLLASAYA). Residues 19–43 (RSEENDEQSLSQRDVLEEESLREIR) constitute a propeptide that is removed on maturation. Asparagine 70 carries the asparagine amide modification. The propeptide occupies 74-123 (TAEEHEVMKRLEAVMRDLDSLDYPEEAAERETRSFNQEEIANLFTKKEKR). Leucine 143 carries the post-translational modification Leucine amide.

This sequence belongs to the bombinin family. In terms of tissue distribution, expressed by the skin glands.

It is found in the secreted. Functionally, antibacterial peptide with amphipathic alpha-helical structure that has activity against both Gram-positive and Gram-negative bacteria. Also shows antimicrobial activity against the fungus C.albicans, but not against A.flavus nor P.uticale. It has little hemolytic activity. It possess a significant cytotoxicity against tumor cell lines, but does not possess a significant anti-HIV activity. Also shows high spermicidal activity. Antibacterial peptide with activity against both Gram-positive and Gram-negative bacteria. Also shows antimicrobial activity against the fungus C.albicans. In addition, shows strong hemolytic activity. This Bombina maxima (Giant fire-bellied toad) protein is Maximins 1/H1.